We begin with the raw amino-acid sequence, 310 residues long: Putative S-adenosyl-L-methionine-dependent methyltransferase Mb0151 (310 aa).

S-adenosyl-L-methionine contacts are provided by residues Asp-132 and 161–162 (DL).

Belongs to the UPF0677 family.

Functionally, exhibits S-adenosyl-L-methionine-dependent methyltransferase activity. The polypeptide is Putative S-adenosyl-L-methionine-dependent methyltransferase Mb0151 (Mycobacterium bovis (strain ATCC BAA-935 / AF2122/97)).